A 387-amino-acid chain; its full sequence is Zinc transporter 7 (387 aa).

Residues methionine 1–asparagine 37 lie on the Cytoplasmic side of the membrane. The helical transmembrane segment at leucine 38 to tryptophan 58 threads the bilayer. Over serine 59–aspartate 67 the chain is Lumenal. Residues serine 68–serine 88 form a helical membrane-spanning segment. Residues arginine 89–arginine 102 are Cytoplasmic-facing. The chain crosses the membrane as a helical span at residues alanine 103–phenylalanine 123. The Lumenal segment spans residues serine 124 to arginine 140. A helical transmembrane segment spans residues leucine 141–histidine 161. The interval histidine 161 to histidine 232 is his-rich loop. The Cytoplasmic segment spans residues glycine 162–glycine 247. The disordered stretch occupies residues serine 167 to glycine 237. The segment covering glycine 187 to glycine 201 has biased composition (basic residues). Basic and acidic residues-rich tracts occupy residues histidine 202 to histidine 214 and histidine 221 to threonine 233. The helical transmembrane segment at valine 248 to leucine 268 threads the bilayer. At methionine 269–aspartate 273 the chain is on the lumenal side. A helical transmembrane segment spans residues leucine 274–valine 294. The Cytoplasmic segment spans residues proline 295–methionine 387.

Belongs to the cation diffusion facilitator (CDF) transporter (TC 2.A.4) family. SLC30A subfamily. In terms of assembly, homooligomer.

It is found in the golgi apparatus membrane. Its subcellular location is the cytoplasmic vesicle. The protein resides in the golgi apparatus. It localises to the trans-Golgi network. The protein localises to the sarcoplasmic reticulum. It is found in the mitochondrion. It carries out the reaction Zn(2+)(in) = Zn(2+)(out). Its function is as follows. Zinc ion transporter mediating zinc entry from the cytosol into the lumen of organelles along the secretory pathway. By contributing to zinc ion homeostasis within the early secretory pathway, regulates the activation and folding of enzymes like alkaline phosphatases. This is Zinc transporter 7 (slc30a7) from Danio rerio (Zebrafish).